The primary structure comprises 113 residues: MATPIIVGATIAGIAYSSRFLIRVIQRAKSKQLFEMVSTPGFTVETIEDGFENKMTPAEAANILGLKEESTKEEIKIRHKLLMIKNHPDKGGSSYLATKINEARNVLSSKNSN.

Topologically, residues 1-4 are mitochondrial intermembrane; it reads MATP. Residues 5–22 form a helical membrane-spanning segment; sequence IIVGATIAGIAYSSRFLI. Over 23–113 the chain is Mitochondrial matrix; sequence RVIQRAKSKQ…RNVLSSKNSN (91 aa). The region spanning 59-113 is the J domain; sequence EAANILGLKEESTKEEIKIRHKLLMIKNHPDKGGSSYLATKINEARNVLSSKNSN.

This sequence belongs to the TIM14 family. Interacts with PHB2; the interaction associates DNAJC19 with the prohibitin complex. Interacts with TIMM16/PAM16. May be a component of the PAM complex at least composed of a mitochondrial HSP70 protein, GRPEL1 or GRPEL2, TIMM44, TIMM16/PAM16 and TIMM14/DNAJC19.

The protein localises to the mitochondrion inner membrane. Functionally, mitochondrial co-chaperone which forms a complex with prohibitins to regulate cardiolipin remodeling. May be a component of the PAM complex, a complex required for the translocation of transit peptide-containing proteins from the inner membrane into the mitochondrial matrix in an ATP-dependent manner. May act as a co-chaperone that stimulate the ATP-dependent activity. This Dictyostelium discoideum (Social amoeba) protein is Mitochondrial import inner membrane translocase subunit TIM14 (dnajc19).